Consider the following 331-residue polypeptide: Isopenicillin N synthase (331 aa).

Isopenicillin N-binding residues include Arg87, Tyr91, Ser183, and Tyr189. N-[(5S)-5-amino-5-carboxypentanoyl]-L-cysteinyl-D-valine is bound by residues Arg87, Tyr91, Ser183, Tyr189, His214, and Asp216. In terms of domain architecture, Fe2OG dioxygenase spans 181–288 (LSSVVLIRYP…RQSLPFFVNL (108 aa)). Residues His214, Asp216, and His270 each coordinate Fe(2+). Arg279 is a 2-oxoglutarate binding site. Isopenicillin N is bound at residue Ser281. Residue Ser281 coordinates N-[(5S)-5-amino-5-carboxypentanoyl]-L-cysteinyl-D-valine.

Belongs to the iron/ascorbate-dependent oxidoreductase family. The cofactor is Fe(2+).

It localises to the cytoplasm. The protein resides in the cytosol. It catalyses the reaction N-[(5S)-5-amino-5-carboxypentanoyl]-L-cysteinyl-D-valine + O2 = isopenicillin N + 2 H2O. It participates in antibiotic biosynthesis; penicillin G biosynthesis; penicillin G from L-alpha-aminoadipate and L-cysteine and L-valine: step 2/3. Isopenicillin N synthase; part of the gene cluster that mediates the biosynthesis of penicillin, the world's most important antibiotic. The first step of the pathway is performed by the trimodular NRPS acvA that produces the tripeptide N-[(5S)-5-amino-5-carboxypentanoyl]-L-cysteinyl-D-valine (LLD-ACV or ACV) via condensation of the 3 residues L-2-aminoadipate, L-cysteine and L-valine. The precursor amino acids for penicillin biosynthesis are withdrawn from the vacuolar amino acid pool by the MFS-type transporter penV. Each of the constituent amino acids of the tripeptide acv are activated as aminoacyl-adenylates with peptide bonds formed through the participation of amino acid thioester intermediates. The tripeptide ACV is then cyclized to form isopenicillin N (IPN) by the isopenicillin N synthase ipnA that forms the beta-lactam nucleus. Finally, the alpha-aminoadipyl side chain is exchanged for phenylacetic acid by the isopenicillin N acyltransferase aatA to yield penicillin. This step occurs in the peroxisomal matrix and the penM and paaT transporters are involved in the isopenicillin N and phenylacetic acid import into the peroxisome, respectively. The protein is Isopenicillin N synthase of Penicillium rubens (strain ATCC 28089 / DSM 1075 / NRRL 1951 / Wisconsin 54-1255) (Penicillium chrysogenum).